The chain runs to 131 residues: Ribonuclease VapC4 (131 aa).

Positions 4–106 constitute a PINc domain; sequence IVPDTNFLIY…IVATNDKELK (103 aa). Residues D7 and D102 each contribute to the Mg(2+) site.

Belongs to the PINc/VapC protein family. Mg(2+) is required as a cofactor.

Its function is as follows. Toxic component of a type II toxin-antitoxin (TA) system. An RNase. Its cognate antitoxin is VapB4. The protein is Ribonuclease VapC4 of Methanocaldococcus jannaschii (strain ATCC 43067 / DSM 2661 / JAL-1 / JCM 10045 / NBRC 100440) (Methanococcus jannaschii).